The primary structure comprises 160 residues: Xanthine-guanine phosphoribosyltransferase (160 aa).

5-phospho-alpha-D-ribose 1-diphosphate-binding positions include 41–42 and 93–101; these read RG and DDLVDTGRT. Position 94 (Asp94) interacts with Mg(2+). Residues Asp97 and Ile140 each coordinate guanine. Xanthine-binding residues include Asp97 and Ile140. Residues 97 to 101 and 139 to 140 each bind GMP; these read DTGRT and WI.

This sequence belongs to the purine/pyrimidine phosphoribosyltransferase family. XGPT subfamily. As to quaternary structure, homotetramer. Mg(2+) is required as a cofactor.

The protein resides in the cell inner membrane. The enzyme catalyses GMP + diphosphate = guanine + 5-phospho-alpha-D-ribose 1-diphosphate. The catalysed reaction is XMP + diphosphate = xanthine + 5-phospho-alpha-D-ribose 1-diphosphate. It carries out the reaction IMP + diphosphate = hypoxanthine + 5-phospho-alpha-D-ribose 1-diphosphate. It participates in purine metabolism; GMP biosynthesis via salvage pathway; GMP from guanine: step 1/1. Its pathway is purine metabolism; XMP biosynthesis via salvage pathway; XMP from xanthine: step 1/1. Purine salvage pathway enzyme that catalyzes the transfer of the ribosyl-5-phosphate group from 5-phospho-alpha-D-ribose 1-diphosphate (PRPP) to the N9 position of the 6-oxopurines guanine and xanthine to form the corresponding ribonucleotides GMP (guanosine 5'-monophosphate) and XMP (xanthosine 5'-monophosphate), with the release of PPi. To a lesser extent, also acts on hypoxanthine. In Desulfotalea psychrophila (strain LSv54 / DSM 12343), this protein is Xanthine-guanine phosphoribosyltransferase.